Reading from the N-terminus, the 384-residue chain is Glucans biosynthesis protein C (384 aa).

Transmembrane regions (helical) follow at residues 17–37 (AWLM…THSW), 54–74 (FIHA…SYML), 91–111 (VGIP…ILLQ), 140–160 (LWFL…FTWF), 173–193 (AISL…YAAI), 212–232 (FIVM…LAFI), 240–260 (FTTP…AYLL), 274–294 (TESV…FSLG), 311–331 (ASLF…AYIT), and 338–358 (LIGF…LYEI).

It belongs to the acyltransferase 3 family. OpgC subfamily.

Its subcellular location is the cell membrane. It participates in glycan metabolism; osmoregulated periplasmic glucan (OPG) biosynthesis. Necessary for the succinyl substitution of periplasmic glucans. Could catalyze the transfer of succinyl residues from the cytoplasmic side of the membrane to the nascent glucan backbones on the periplasmic side of the membrane. This chain is Glucans biosynthesis protein C, found in Salmonella typhi.